The primary structure comprises 220 residues: CRISPR system Cms endoribonuclease Csm3 (220 aa).

This sequence belongs to the CRISPR-associated Csm3 family. Part of the Csm effector complex that includes at least Cas10(1), Csm2(3), Csm3(5), Csm4(1), Csm5(1) and mature crRNA. The Csm complex is elongated and slightly twisted with a maximal length of 215 Angstroms and a diameter of 75-80 Angstroms. It has been modeled to have a central protein filamant of Csm3 subunits along which the dsRNA helix of paired crRNA and target RNA binds. The filament is capped at one end by Cas10 and Csm4 and at the other end by Csm5; ssDNA is thought to bind to the N-terminal HD domain of Cas10. Csm with a precursor crRNA does not include Csm5, while Cas6, the enzyme probably involved in pre-crRNA processing, is found associated with a subset of the Csm complex. It depends on a metal cation as a cofactor.

Its activity is regulated as follows. Target ssRNase is inhibited by EDTA. Its function is as follows. CRISPR (clustered regularly interspaced short palindromic repeat) is an adaptive immune system that provides protection against mobile genetic elements (viruses, transposable elements and conjugative plasmids). CRISPR clusters contain spacers, sequences complementary to antecedent mobile elements, and target invading nucleic acids. CRISPR clusters are transcribed and processed into CRISPR RNA (crRNA). The type III-A Csm effector complex binds crRNA and acts as a crRNA-guided RNase, DNase and cyclic oligoadenylate synthase; binding of target RNA cognate to the crRNA is required for all activities. In a heterologous host this Csm effector complex restricts ssRNA phage MS2, suggesting it may target RNA viruses in vivo. In terms of biological role, csm functions as a non-specific ssDNase. Base-pairing between crRNA and target RNA to form a ternary Csm complex activates a ssDNase activity; target RNA cleavage suppresses the ssDNase, a temporal control that prevents uncontrolled DNA degradation. Viral RNA transcripts probably tether the Csm complex to the viral genome, recruiting Cas10 ssDNA activity which is able to degrade DNA in the transcription bubble, spatially controlling the DNase activity. This subunit has the target ssRNA endonuclease activity; it cleaves multiple sites in the target RNA at 6 nucleotide intervals. The number of cleavage sites in the target RNA correlates with the number of Csm3 subunits in the Csm effector complex. In the Csm complex target RNA and ssDNA are cleaved simultaneously, although RNase activity (of Csm3) is much faster. RNA cleavage by Csm3 is not required for ssDNase activity as Csm complex with inactive Csm3 still has ssDNase activity; however as the cleaved target RNA products dissociate away ssDNase activity decreases. The sequence is that of CRISPR system Cms endoribonuclease Csm3 from Streptococcus thermophilus.